The chain runs to 218 residues: Thiamine-phosphate synthase (218 aa).

Residues 43-47 (QLRMK) and Asn75 each bind 4-amino-2-methyl-5-(diphosphooxymethyl)pyrimidine. Positions 76 and 95 each coordinate Mg(2+). Thr114 contacts 4-amino-2-methyl-5-(diphosphooxymethyl)pyrimidine. 140–142 (TST) contributes to the 2-[(2R,5Z)-2-carboxy-4-methylthiazol-5(2H)-ylidene]ethyl phosphate binding site. Residue Lys143 participates in 4-amino-2-methyl-5-(diphosphooxymethyl)pyrimidine binding. 2-[(2R,5Z)-2-carboxy-4-methylthiazol-5(2H)-ylidene]ethyl phosphate contacts are provided by residues Gly171 and 191–192 (VS).

It belongs to the thiamine-phosphate synthase family. Mg(2+) serves as cofactor.

It carries out the reaction 2-[(2R,5Z)-2-carboxy-4-methylthiazol-5(2H)-ylidene]ethyl phosphate + 4-amino-2-methyl-5-(diphosphooxymethyl)pyrimidine + 2 H(+) = thiamine phosphate + CO2 + diphosphate. The enzyme catalyses 2-(2-carboxy-4-methylthiazol-5-yl)ethyl phosphate + 4-amino-2-methyl-5-(diphosphooxymethyl)pyrimidine + 2 H(+) = thiamine phosphate + CO2 + diphosphate. The catalysed reaction is 4-methyl-5-(2-phosphooxyethyl)-thiazole + 4-amino-2-methyl-5-(diphosphooxymethyl)pyrimidine + H(+) = thiamine phosphate + diphosphate. The protein operates within cofactor biosynthesis; thiamine diphosphate biosynthesis; thiamine phosphate from 4-amino-2-methyl-5-diphosphomethylpyrimidine and 4-methyl-5-(2-phosphoethyl)-thiazole: step 1/1. Functionally, condenses 4-methyl-5-(beta-hydroxyethyl)thiazole monophosphate (THZ-P) and 2-methyl-4-amino-5-hydroxymethyl pyrimidine pyrophosphate (HMP-PP) to form thiamine monophosphate (TMP). The protein is Thiamine-phosphate synthase of Myxococcus xanthus (strain DK1622).